The chain runs to 250 residues: DNA repair protein RecO (250 aa).

This sequence belongs to the RecO family.

Functionally, involved in DNA repair and RecF pathway recombination. This chain is DNA repair protein RecO, found in Granulibacter bethesdensis (strain ATCC BAA-1260 / CGDNIH1).